The following is a 556-amino-acid chain: Oxygen-dependent choline dehydrogenase (556 aa).

Asp6–Glu35 serves as a coordination point for FAD. His475 acts as the Proton acceptor in catalysis.

Belongs to the GMC oxidoreductase family. FAD is required as a cofactor.

The enzyme catalyses choline + A = betaine aldehyde + AH2. It carries out the reaction betaine aldehyde + NAD(+) + H2O = glycine betaine + NADH + 2 H(+). It functions in the pathway amine and polyamine biosynthesis; betaine biosynthesis via choline pathway; betaine aldehyde from choline (cytochrome c reductase route): step 1/1. In terms of biological role, involved in the biosynthesis of the osmoprotectant glycine betaine. Catalyzes the oxidation of choline to betaine aldehyde and betaine aldehyde to glycine betaine at the same rate. In Xanthomonas campestris pv. campestris (strain 8004), this protein is Oxygen-dependent choline dehydrogenase.